We begin with the raw amino-acid sequence, 606 residues long: Zinc metalloproteinase-disintegrin-like HF3 (606 aa).

The N-terminal stretch at 1–20 is a signal peptide; sequence MIQVLLVTICLAAFPYQGSS. The propeptide occupies 21 to 190; that stretch reads IILESGNVND…KKASQLVVTA (170 aa). In terms of domain architecture, Peptidase M12B spans 199–395; that stretch reads KYIELVILAD…YKPQCILNEP (197 aa). Ca(2+) is bound at residue Glu-202. An N-linked (GlcNAc...) asparagine glycan is attached at Asn-259. Residue Asp-286 coordinates Ca(2+). 3 disulfides stabilise this stretch: Cys-310/Cys-390, Cys-350/Cys-374, and Cys-352/Cys-357. Asn-313 carries an N-linked (GlcNAc...) asparagine glycan. His-335 contacts Zn(2+). The active site involves Glu-336. Zn(2+) is bound by residues His-339 and His-345. Residue Asn-373 is glycosylated (N-linked (GlcNAc...) asparagine). 8 residues coordinate Ca(2+): Cys-390, Asn-393, Val-405, Asn-408, Leu-410, Glu-412, Glu-415, and Asp-418. The Disintegrin domain maps to 403-489; it reads PPVCGNELLE…DCPTDDFKRN (87 aa). 14 disulfide bridges follow: Cys-406–Cys-435, Cys-417–Cys-430, Cys-419–Cys-425, Cys-429–Cys-452, Cys-443–Cys-449, Cys-448–Cys-474, Cys-461–Cys-481, Cys-468–Cys-500, Cys-493–Cys-505, Cys-512–Cys-562, Cys-527–Cys-569, Cys-540–Cys-550, Cys-557–Cys-594, and Cys-588–Cys-599. A D/ECD-tripeptide motif is present at residues 467-469; it reads ECD. Ca(2+)-binding residues include Asp-469, Glu-472, and Asp-484. N-linked (GlcNAc...) asparagine glycosylation is present at Asn-519. Asn-584 carries an N-linked (GlcNAc...) asparagine glycan.

Belongs to the venom metalloproteinase (M12B) family. P-III subfamily. P-IIIa sub-subfamily. As to quaternary structure, monomer. It depends on Zn(2+) as a cofactor. Expressed by the venom gland.

The protein resides in the secreted. In terms of biological role, the metalloproteinase-disintegrin-like HF3 is a potent hemorrhagic toxin that activates macrophages for phagocytosis through integrin alpha-M/beta-2 (ITGAM/ITGB2). It inhibits collagen-induced platelet aggregation. This protein shows cleavage specificity for substrate for leucine at P1' position, followed by hydrophobic residues in P2'. This is Zinc metalloproteinase-disintegrin-like HF3 from Bothrops jararaca (Jararaca).